Reading from the N-terminus, the 660-residue chain is MSSEVKSRWSGSGSQKSGTARKPTMLEMAENAASRHYEPVPLPLQRSNSPDSSTDKNPESRAADSRAEVIINPDIPPKAIALPLSRYRGRNPFFSKVNIQGRTYNFLERPTGWKCFIYHFTVFLIVLVCLIFSVMSTIEQYHYFANRALVWMEIVLVVFFGTEYIVRLWSAGCRSKYVGFWGRLRFARKPISIIDLIVVVASVIVLCVGSNGQVFATSAIRGIRFLQILRMLHVDRQGGTWRLLGSVVFIHRQELITTLYIGFLGLIFSSYFVYLAEKDAVDDSGSQQFGSYADALWWGVVTVTTIGYGDKVPQTWIGRTIASCFSVFAISFFALPAGILGSGFALKVQQKQRQKHFNRQIPAAASLIQTSWRCHAAENHESATWKMYVRQPTKFYVASPSPKTKKSVGKRKKLKTDKDNGLNSEKSLNVPNITYDHVVDKDDRKFENSNIDGYDSSVKKSLGILDVNSGALSRANSYADDLDFIEGEPVLAPITHVSQLRESHRVTVKVIRRMQYFVAKKKFQQARKPYDVRDVIEQYSQGHLNLMVRIKELQRRLDQSLGKPTMFLSVSEKSQDRGKNTIGARLNRVEEKFVHMDQKLNTITDMLHHLVAHQQGHPHPQTQPQAQGTVVQAVASTHSSLPSYEQLTVRRKDQDNQPDL.

Residues 1–18 (MSSEVKSRWSGSGSQKSG) show a composition bias toward polar residues. Positions 1 to 67 (MSSEVKSRWS…PESRAADSRA (67 aa)) are disordered. Topologically, residues 1 to 113 (MSSEVKSRWS…YNFLERPTGW (113 aa)) are cytoplasmic. Residues 53-67 (STDKNPESRAADSRA) are compositionally biased toward basic and acidic residues. The helical transmembrane segment at 114–135 (KCFIYHFTVFLIVLVCLIFSVM) threads the bilayer. At 136–146 (STIEQYHYFAN) the chain is on the extracellular side. Residues 147 to 169 (RALVWMEIVLVVFFGTEYIVRLW) form a helical membrane-spanning segment. Residues 170–185 (SAGCRSKYVGFWGRLR) lie on the Cytoplasmic side of the membrane. A helical membrane pass occupies residues 186 to 211 (FARKPISIIDLIVVVASVIVLCVGSN). The Extracellular segment spans residues 212–219 (GQVFATSA). A helical; Voltage-sensor transmembrane segment spans residues 220–235 (IRGIRFLQILRMLHVD). At 236–253 (RQGGTWRLLGSVVFIHRQ) the chain is on the cytoplasmic side. Q237 contacts a 1,2-diacyl-sn-glycero-3-phospho-(1D-myo-inositol-4,5-bisphosphate). Residues 254 to 276 (ELITTLYIGFLGLIFSSYFVYLA) form a helical membrane-spanning segment. The Extracellular segment spans residues 277–292 (EKDAVDDSGSQQFGSY). Residues 293-313 (ADALWWGVVTVTTIGYGDKVP) constitute an intramembrane region (pore-forming). At 314–315 (QT) the chain is on the extracellular side. The chain crosses the membrane as a helical span at residues 316–341 (WIGRTIASCFSVFAISFFALPAGILG). At 342–660 (SGFALKVQQK…RKDQDNQPDL (319 aa)) the chain is on the cytoplasmic side. The interval 399-426 (SPSPKTKKSVGKRKKLKTDKDNGLNSEK) is disordered. Over residues 403–415 (KTKKSVGKRKKLK) the composition is skewed to basic residues. Residues 579–615 (KNTIGARLNRVEEKFVHMDQKLNTITDMLHHLVAHQQ) adopt a coiled-coil conformation.

It belongs to the potassium channel family. KQT (TC 1.A.1.15) subfamily. Kv7.1/KCNQ1 sub-subfamily. Tetramer. Heterotetramer with KCNE1; targets to the membrane raft. Interacts (via C-terminus) with CALM; forms a heterotetramer in a calcium-independent manner. Interacts with KCNE2; form a heterooligomer complex that targets to the membrane raft and leading to currents with an apparently instantaneous activation, a rapid deactivation process and a linear current-voltage relationship and decreases the amplitude of the outward current. Interacts with KCNE3; four KCNE3 molecules are bound to one KCNQ1 tetramer (4:4 KCNQ1:KCNE3 stoichiometry); alters membrane raft localization; affects KCNQ1 structure and gating properties. Interacts with KCNE4; impairs KCNQ1 localization in lipid rafts and inhibits voltage-gated potassium channel activity. Interacts with KCNE5; impairs KCNQ1 localization in lipid rafts and only conducts current upon strong and continued depolarization. Expressed only in rectal gland and heart. Faintly expressed in intestine. Undetectable in kidney, brain, testis, liver and gills.

It localises to the cell membrane. It is found in the cytoplasmic vesicle membrane. The protein resides in the membrane raft. The protein localises to the endoplasmic reticulum. Its subcellular location is the basolateral cell membrane. It catalyses the reaction K(+)(in) = K(+)(out). PIP2 molecule is essential to activate KCNQ channels by inducing the coupling of the voltage-sensing domain (VSD) and the pore-forming domain (PD). Upon channel activation, PIP2 disrupts the VSD-calmodulin/CALM interactions, causing the release of CALM from the VSD which triggers the opening of the gate. Calcium potentiates KCNQ1 channel current through calcium-bound CALM. Calcium-bound CALM competes with PIP2 to stabilize the channel open state. Pore-forming subunit of the voltage-gated potassium (Kv) channel involved in the regulation of cardiomyocyte excitability and important in normal development and functions of myocardium, inner ear, stomach and colon. Associates with KCNE beta subunits that modulates current kinetics. Induces a voltage-dependent by rapidly activating and slowly deactivating potassium-selective outward current. Also promotes a delayed voltage activated potassium current showing outward rectification characteristic. During beta-adrenergic receptor stimulation participates in cardiac repolarization by associating with KCNE1 to form the I(Ks) cardiac potassium current that increases the amplitude and slows down the activation kinetics of outward potassium current I(Ks). When associated with KCNE3, forms the potassium channel that is important for cyclic AMP-stimulated intestinal secretion of chloride ions. When associated with KCNE2, forms a heterooligomer complex leading to currents with an apparently instantaneous activation, a rapid deactivation process and a linear current-voltage relationship and decreases the amplitude of the outward current. When associated with KCNE4, inhibits voltage-gated potassium channel activity. When associated with KCNE5, this complex only conducts current upon strong and continued depolarization. This is Potassium voltage-gated channel subfamily KQT member 1 from Squalus acanthias (Spiny dogfish).